The following is a 685-amino-acid chain: Linoleate 9/13-lipoxygenase (685 aa).

A signal peptide spans 1 to 19 (MKRRSVLLSGVALSGTALA). In terms of domain architecture, Lipoxygenase spans 122–685 (ASLPASAAAQ…PSRIPASTNI (564 aa)). Residues His377, His382, His555, Asn559, and Ile685 each contribute to the Fe cation site.

The protein belongs to the lipoxygenase family. In terms of assembly, monomer. The cofactor is Fe cation.

It localises to the periplasm. It catalyses the reaction (9Z,12Z)-octadecadienoate + O2 = (9S)-hydroperoxy-(10E,12Z)-octadecadienoate. The enzyme catalyses (9Z)-octadecenoate + O2 = (8E,10S)-10-hydroperoxy-octadeca-8-enoate. The catalysed reaction is (9Z,12Z)-octadecadienoate + O2 = (8E,10S,12Z)-10-hydroperoxyoctadeca-8,12-dienoate. It carries out the reaction (9Z,12Z,15Z)-octadecatrienoate + O2 = (8E,10S,12Z,15Z)-10-hydroperoxyoctadeca-8,12,15-trienoate. It catalyses the reaction (9Z,12Z)-octadecadienoate + O2 = (13S)-hydroperoxy-(9Z,11E)-octadecadienoate. The enzyme catalyses (9Z,12Z,15Z)-octadecatrienoate + O2 = (13S)-hydroperoxy-(9Z,11E,15Z)-octadecatrienoate. Its activity is regulated as follows. Inhibited by Ba(2+), Zn(2+) and Fe(3+). In presence of oxygen, converts linoleate into (9S)-hydroperoxy-10,12-octadecenoate (9HPOD), which spontaneously decomposes to the corresponding 9-hydroxy-10,12-octadecenoate (9HOD), and into 13-hydroperoxy-9,11-octadecenoate (13HPOD) which spontaneously decomposes to the corresponding 13-hydroxy-9,11-octadecenoate (13HOD). Also active on linolenate. To a lesser extent, is also able to convert oleate into (10S)-hydroperoxy-8E-octadecenoate, which spontaneously decomposes to the corresponding 10-hydroxy-8E-octadecenoate. Is almost not active on arachidonate. This is Linoleate 9/13-lipoxygenase (lox) from Pseudomonas aeruginosa.